The chain runs to 72 residues: UPF0154 protein YneF (72 aa).

Residues 4 to 24 form a helical membrane-spanning segment; sequence WVGILVGVVALLIGVALGFFI.

This sequence belongs to the UPF0154 family.

The protein resides in the membrane. This chain is UPF0154 protein YneF (yneF), found in Bacillus subtilis (strain 168).